Consider the following 375-residue polypeptide: Probable aminomethyltransferase (375 aa).

This sequence belongs to the GcvT family. In terms of assembly, the glycine cleavage system is composed of four proteins: P, T, L and H.

It carries out the reaction N(6)-[(R)-S(8)-aminomethyldihydrolipoyl]-L-lysyl-[protein] + (6S)-5,6,7,8-tetrahydrofolate = N(6)-[(R)-dihydrolipoyl]-L-lysyl-[protein] + (6R)-5,10-methylene-5,6,7,8-tetrahydrofolate + NH4(+). Its function is as follows. The glycine cleavage system catalyzes the degradation of glycine. The sequence is that of Probable aminomethyltransferase from Aeropyrum pernix (strain ATCC 700893 / DSM 11879 / JCM 9820 / NBRC 100138 / K1).